Consider the following 423-residue polypeptide: Acetylornithine aminotransferase, mitochondrial (423 aa).

Lys276 is subject to N6-(pyridoxal phosphate)lysine.

It belongs to the class-III pyridoxal-phosphate-dependent aminotransferase family. Pyridoxal 5'-phosphate serves as cofactor.

It is found in the mitochondrion matrix. It carries out the reaction N(2)-acetyl-L-ornithine + 2-oxoglutarate = N-acetyl-L-glutamate 5-semialdehyde + L-glutamate. Its pathway is amino-acid biosynthesis; L-arginine biosynthesis; N(2)-acetyl-L-ornithine from L-glutamate: step 4/4. The sequence is that of Acetylornithine aminotransferase, mitochondrial (ARG8) from Eremothecium gossypii (strain ATCC 10895 / CBS 109.51 / FGSC 9923 / NRRL Y-1056) (Yeast).